A 419-amino-acid chain; its full sequence is Histidine--tRNA ligase (419 aa).

This sequence belongs to the class-II aminoacyl-tRNA synthetase family. Homodimer.

The protein localises to the cytoplasm. It carries out the reaction tRNA(His) + L-histidine + ATP = L-histidyl-tRNA(His) + AMP + diphosphate + H(+). The sequence is that of Histidine--tRNA ligase from Thermosipho melanesiensis (strain DSM 12029 / CIP 104789 / BI429).